The following is a 290-amino-acid chain: MNTPKKHKKFKAKMILQIIMVIIGGIIAAYGLETVLIPNSVSDGGVTGLSIVGSQLFNLPLGILIAVINIPFVWLGYKQIGKSFALLSIIGIVSLAAGTSFFHHTPAIIEGDTLLITVVGGIILGFGMGLALRNGGALDGIDMLAVLLSRKLPFGTSDLILFLNLFVFIFVSTVFGLQGALLSVIAYYIASKVIHVVEEGLSGSKTFQIITTQPELMVETIRDQLGRSATYKEAYGGFSHEKFKEITCVINRLEETKLKEIINDIDKTAFVTVYDVAEVKGSNFRNLNHH.

5 helical membrane passes run 18 to 38 (IIMV…VLIP), 56 to 76 (LFNL…VWLG), 83 to 103 (SFAL…SFFH), 112 to 132 (DTLL…GLAL), and 165 to 185 (LFVF…LSVI).

This sequence belongs to the UPF0750 family.

Its subcellular location is the cell membrane. This Bacillus subtilis (strain 168) protein is UPF0750 membrane protein YdeO (ydeO).